Consider the following 289-residue polypeptide: Shikimate dehydrogenase (NADP(+)) (289 aa).

Residues 20 to 22 (SIS) and Ser-67 each bind shikimate. The Proton acceptor role is filled by Lys-71. Shikimate-binding residues include Asn-92 and Asp-107. NADP(+) contacts are provided by residues 132–136 (GGGGA) and Val-230. Residue Tyr-232 coordinates shikimate. Gly-253 provides a ligand contact to NADP(+).

It belongs to the shikimate dehydrogenase family. As to quaternary structure, homodimer.

The enzyme catalyses shikimate + NADP(+) = 3-dehydroshikimate + NADPH + H(+). The protein operates within metabolic intermediate biosynthesis; chorismate biosynthesis; chorismate from D-erythrose 4-phosphate and phosphoenolpyruvate: step 4/7. Functionally, involved in the biosynthesis of the chorismate, which leads to the biosynthesis of aromatic amino acids. Catalyzes the reversible NADPH linked reduction of 3-dehydroshikimate (DHSA) to yield shikimate (SA). The chain is Shikimate dehydrogenase (NADP(+)) from Streptococcus mutans serotype c (strain ATCC 700610 / UA159).